Reading from the N-terminus, the 786-residue chain is MLGARAWLGRVLLLPRAGAGLAASRRGSSSRDKDRSATVSSSVPMPAGGKGSHPSSTPQRVPNRLIHEKSPYLLQHAYNPVDWYPWGQEAFDKARKENKPIFLSVGYSTCHWCHMMEEESFQNEEIGRLLSEDFVSVKVDREERPDVDKVYMTFVQATSSGGGWPMNVWLTPNLQPFVGGTYFPPEDGLTRVGFRTVLLRIREQWKQNKNTLLENSQRVTTALLARSEISVGDRQLPPSAATVNNRCFQQLDEGYDEEYGGFAEAPKFPTPVILSFLFSYWLSHRLTQDGSRAQQMALHTLKMMANGGIRDHVGQGFHRYSTDRQWHVPHFEKMLYDQAQLAVAYSQAFQLSGDEFYSDVAKGILQYVARSLSHRSGGFYSAEDADSPPERGQRPKEGAYYVWTVKEVQQLLPEPVLGATEPLTSGQLLMKHYGLTEAGNISPSQDPKGELQGQNVLTVRYSLELTAARFGLDVEAVRTLLNSGLEKLFQARKHRPKPHLDSKMLAAWNGLMVSGYAVTGAVLGQDRLINYATNGAKFLKRHMFDVASGRLMRTCYTGPGGTVEHSNPPCWGFLEDYAFVVRGLLDLYEASQESAWLEWALRLQDTQDKLFWDSQGGGYFCSEAELGAGLPLRLKDDQDGAEPSANSVSAHNLLRLHGFTGHKDWMDKCVCLLTAFSERMRRVPVALPEMVRALSAQQQTLKQIVICGDRQAKDTKALVQCVHSVYIPNKVLILADGDPSSFLSRQLPFLSTLRRLEDQATAYVCENQACSVPITDPCELRKLLHP.

Residues 1 to 22 (MLGARAWLGRVLLLPRAGAGLA) form the signal peptide. A disordered region spans residues 23 to 61 (ASRRGSSSRDKDRSATVSSSVPMPAGGKGSHPSSTPQRV). A Phosphoserine modification is found at Ser649.

It localises to the secreted. May play a role in fertility regulation. The polypeptide is Spermatogenesis-associated protein 20 (SPATA20) (Homo sapiens (Human)).